We begin with the raw amino-acid sequence, 221 residues long: Late protein I196L (221 aa).

A run of 3 repeats spans residues serine 28 to serine 48, serine 49 to serine 69, and serine 70 to serine 90. Residues serine 91–serine 112 form a 4; approximate repeat.

It belongs to the asfivirus I196L family.

This African swine fever virus (isolate Tick/Malawi/Lil 20-1/1983) (ASFV) protein is Late protein I196L.